The following is a 66-amino-acid chain: KEGYIVNYYDGCKYPCVKLGDNDYCLRECRLRYYKSAGGYCYAFACWCTHLYEQAVVWPLPNKTCL.

Residues 1–66 form the LCN-type CS-alpha/beta domain; that stretch reads KEGYIVNYYD…VWPLPNKTCL (66 aa). Intrachain disulfides connect Cys-12-Cys-65, Cys-16-Cys-41, Cys-25-Cys-46, and Cys-29-Cys-48.

It belongs to the long (4 C-C) scorpion toxin superfamily. Sodium channel inhibitor family. Beta subfamily. As to expression, expressed by the venom gland.

Its subcellular location is the secreted. In terms of biological role, beta toxins bind voltage-independently at site-4 of sodium channels (Nav) and reduces peak current and shifts the voltage of activation toward more negative potentials thereby affecting sodium channel activation and promoting spontaneous and repetitive firing. Has an inhibitory effect on voltage-gated sodium channels hNav1.1/SCN1A, hNav1.2/SCN2A, hNav1.4/SCN4A and hNav1.6/SCN8A. Reduces the peak current of hNav1.5/SCN5A but does not shift its voltage of activation. Also affects the inactivation processes of hNav1.1/SCN1A, hNav1.4/SCN4A, hNav1.5/SCN5A and hNav1.6/SCN8A. This toxin is active against mammals and lethal to mice. The protein is Beta-toxin Cb3 of Centruroides baergi (Scorpion).